Reading from the N-terminus, the 550-residue chain is Beta-cubebene synthase (550 aa).

The Mg(2+) site is built by Asp303, Asp307, Asp447, and Glu455. The DDXXD motif signature appears at 303–307 (DDTYD).

It belongs to the terpene synthase family. Tpsa subfamily. It depends on Mg(2+) as a cofactor. Expressed in young developing leaves and in stamens. Not detected in tepals and carpels.

The catalysed reaction is (2E,6E)-farnesyl diphosphate = beta-cubebene + diphosphate. The protein operates within secondary metabolite biosynthesis; terpenoid biosynthesis. Sesquiterpene synthase converting farnesyl diphosphate into beta-cubebene (24.5%), alpha-muurolene (19.3%), delta-cadinol (18.6%), delta-elemene (16.0%), tau-muurolene (10.8%), and beta-elemene (10.8%). No activity with geranyl diphosphate or geranylgeranyl diphosphate. In Magnolia grandiflora (Southern magnolia), this protein is Beta-cubebene synthase.